The sequence spans 541 residues: Membrane protein insertase YidC (541 aa).

5 helical membrane-spanning segments follow: residues 7 to 27 (LLVI…QLDY), 346 to 368 (IVQN…LYPL), 416 to 436 (LGGC…YWTF), 454 to 474 (LSAQ…MFLL), and 495 to 515 (PLIF…YWLV).

This sequence belongs to the OXA1/ALB3/YidC family. Type 1 subfamily. As to quaternary structure, interacts with the Sec translocase complex via SecD. Specifically interacts with transmembrane segments of nascent integral membrane proteins during membrane integration.

Its subcellular location is the cell inner membrane. In terms of biological role, required for the insertion and/or proper folding and/or complex formation of integral membrane proteins into the membrane. Involved in integration of membrane proteins that insert both dependently and independently of the Sec translocase complex, as well as at least some lipoproteins. Aids folding of multispanning membrane proteins. The chain is Membrane protein insertase YidC from Pasteurella multocida (strain Pm70).